A 143-amino-acid chain; its full sequence is Large ribosomal subunit protein uL15 (143 aa).

Basic residues-rich tracts occupy residues 1 to 13 and 23 to 38; these read MIRKSKKITKMRG and KKHRGAGHRGGRGNAG. Residues 1–38 form a disordered region; the sequence is MIRKSKKITKMRGSRTCGYGEAKKHRGAGHRGGRGNAG.

It belongs to the universal ribosomal protein uL15 family. In terms of assembly, part of the 50S ribosomal subunit.

In terms of biological role, binds to the 23S rRNA. This Methanococcus maripaludis (strain C6 / ATCC BAA-1332) protein is Large ribosomal subunit protein uL15.